We begin with the raw amino-acid sequence, 495 residues long: Phage-like element PBSX protein XkdE (495 aa).

The protein belongs to the phage portal family. PBSX subfamily.

The polypeptide is Phage-like element PBSX protein XkdE (xkdE) (Bacillus subtilis (strain 168)).